Reading from the N-terminus, the 371-residue chain is Histidinol-phosphate aminotransferase (371 aa).

K227 carries the N6-(pyridoxal phosphate)lysine modification.

Belongs to the class-II pyridoxal-phosphate-dependent aminotransferase family. Histidinol-phosphate aminotransferase subfamily. Homodimer. Requires pyridoxal 5'-phosphate as cofactor.

The enzyme catalyses L-histidinol phosphate + 2-oxoglutarate = 3-(imidazol-4-yl)-2-oxopropyl phosphate + L-glutamate. Its pathway is amino-acid biosynthesis; L-histidine biosynthesis; L-histidine from 5-phospho-alpha-D-ribose 1-diphosphate: step 7/9. This chain is Histidinol-phosphate aminotransferase, found in Sphingopyxis alaskensis (strain DSM 13593 / LMG 18877 / RB2256) (Sphingomonas alaskensis).